The primary structure comprises 459 residues: Cyclin-dependent kinase F-4 (459 aa).

One can recognise a Protein kinase domain in the interval 4-283 (FKMIKEVGDG…AAEVLQHTFF (280 aa)). ATP is bound by residues 10–18 (VGDGTFGSV) and Lys-33. The Proton acceptor role is filled by Asp-125. At Ser-151 the chain carries Phosphoserine. Thr-156 bears the Phosphothreonine mark. The tract at residues 310-397 (KGVSEHGMPR…RHSRSLPETG (88 aa)) is disordered. Composition is skewed to polar residues over residues 322 to 346 (STGT…SKTG) and 366 to 375 (ESNNKLTTNR).

It belongs to the protein kinase superfamily. CMGC Ser/Thr protein kinase family. CDC2/CDKX subfamily.

The catalysed reaction is L-seryl-[protein] + ATP = O-phospho-L-seryl-[protein] + ADP + H(+). It carries out the reaction L-threonyl-[protein] + ATP = O-phospho-L-threonyl-[protein] + ADP + H(+). It catalyses the reaction [DNA-directed RNA polymerase] + ATP = phospho-[DNA-directed RNA polymerase] + ADP + H(+). The polypeptide is Cyclin-dependent kinase F-4 (CDKF-4) (Oryza sativa subsp. japonica (Rice)).